Reading from the N-terminus, the 475-residue chain is 7-dehydrocholesterol reductase (475 aa).

The disordered stretch occupies residues 1 to 21; that stretch reads MAAKSQPNIPKAKSLDGVTND. Serine 14 carries the post-translational modification Phosphoserine. The next 6 helical transmembrane spans lie at 40–60, 154–174, 177–197, 266–286, 306–326, and 331–351; these read LASV…FIMA, THLL…TIIF, WIPL…FAMV, VTNA…DFFW, LGWG…LYLV, and QLST…YYIF. NADP(+) contacts are provided by residues lysine 358, arginine 362, leucine 395, tryptophan 400, and 407–408; that span reads NY. The chain crosses the membrane as a helical span at residues 420–440; sequence LACGGGHLLPYFYIIYMAILL. NADP(+) is bound by residues aspartate 447, 451-455, and tyrosine 462; that span reads CASKY.

It belongs to the ERG4/ERG24 family. Interacts with DHCR24; this interaction regulates DHCR7 activity. Interacts with TMEM147. In terms of tissue distribution, widely expressed. Most abundant in adrenal gland, liver, testis, and brain.

The protein localises to the endoplasmic reticulum membrane. It carries out the reaction cholesterol + NADP(+) = 7-dehydrocholesterol + NADPH + H(+). It catalyses the reaction 7-dehydrodesmosterol + NADPH + H(+) = desmosterol + NADP(+). The enzyme catalyses 5,6alpha-epoxy-5alpha-cholestan-3beta-ol + H2O = 5alpha-cholestane-3beta,5,6beta-triol. The catalysed reaction is 5,6beta-epoxy-5beta-cholestan-3beta-ol + H2O = 5alpha-cholestane-3beta,5,6beta-triol. Its pathway is steroid biosynthesis; cholesterol biosynthesis. With respect to regulation, 7-DHC reductase and cholesterol-5,6-epoxide hydrolase (ChEH) activities are inhibited by tamoxifen and the selective AEBS ligand (4-benzyl-phenoxy)-ethyl-N-pyrrolidine (PBPE). ChEH activity is inhibited by oleic acid. Oxidoreductase that catalyzes the last step of the cholesterol synthesis pathway, which transforms cholesta-5,7-dien-3beta-ol (7-dehydrocholesterol,7-DHC) into cholesterol by reducing the C7-C8 double bond of its sterol core. Can also metabolize cholesta-5,7,24-trien-3beta-ol (7-dehydrodemosterol, 7-DHD) to desmosterol, which is then metabolized by the Delta(24)-sterol reductase (DHCR24) to cholesterol. Modulates ferroptosis (a form of regulated cell death driven by iron-dependent lipid peroxidation) through the metabolic breakdown of the anti-ferroptotic metabolites 7-DHC and 7-DHD which, when accumulated, divert the propagation of peroxyl radical-mediated damage from phospholipid components to its sterol core, protecting plasma and mitochondrial membranes from phospholipid autoxidation. In terms of biological role, component of the microsomal antiestrogen binding site (AEBS), a multiproteic complex at the ER membrane that consists of an association between cholestenol Delta-isomerase/EBP and DHCR7. This complex is responsible for cholesterol-5,6-epoxide hydrolase (ChEH) activity, which consists in the hydration of cholesterol-5,6-epoxides (5,6-EC) into cholestane-3beta,5alpha,6beta-triol (CT). The precise role of each component of this complex has not been described yet. The polypeptide is 7-dehydrocholesterol reductase (Homo sapiens (Human)).